A 339-amino-acid chain; its full sequence is Phenylalanine--tRNA ligase alpha subunit (339 aa).

E254 contacts Mg(2+).

The protein belongs to the class-II aminoacyl-tRNA synthetase family. Phe-tRNA synthetase alpha subunit type 1 subfamily. In terms of assembly, tetramer of two alpha and two beta subunits. Requires Mg(2+) as cofactor.

The protein resides in the cytoplasm. The enzyme catalyses tRNA(Phe) + L-phenylalanine + ATP = L-phenylalanyl-tRNA(Phe) + AMP + diphosphate + H(+). The sequence is that of Phenylalanine--tRNA ligase alpha subunit from Acetivibrio thermocellus (strain ATCC 27405 / DSM 1237 / JCM 9322 / NBRC 103400 / NCIMB 10682 / NRRL B-4536 / VPI 7372) (Clostridium thermocellum).